The sequence spans 197 residues: Pyridoxal 5'-phosphate synthase subunit PdxT (197 aa).

L-glutamine is bound at residue 54 to 56 (GES). C86 serves as the catalytic Nucleophile. L-glutamine-binding positions include R113 and 141–142 (IR). Catalysis depends on charge relay system residues H177 and E179.

This sequence belongs to the glutaminase PdxT/SNO family. As to quaternary structure, in the presence of PdxS, forms a dodecamer of heterodimers. Only shows activity in the heterodimer.

It carries out the reaction aldehydo-D-ribose 5-phosphate + D-glyceraldehyde 3-phosphate + L-glutamine = pyridoxal 5'-phosphate + L-glutamate + phosphate + 3 H2O + H(+). It catalyses the reaction L-glutamine + H2O = L-glutamate + NH4(+). It participates in cofactor biosynthesis; pyridoxal 5'-phosphate biosynthesis. In terms of biological role, catalyzes the hydrolysis of glutamine to glutamate and ammonia as part of the biosynthesis of pyridoxal 5'-phosphate. The resulting ammonia molecule is channeled to the active site of PdxS. The chain is Pyridoxal 5'-phosphate synthase subunit PdxT from Haloarcula marismortui (strain ATCC 43049 / DSM 3752 / JCM 8966 / VKM B-1809) (Halobacterium marismortui).